Consider the following 217-residue polypeptide: MAAQCVRLARRSLPALALSLRPSPRLLCTATKQKNSGQNLEEDMGQSEQKADPPATEKTLLEEKVKLEEQLKETVEKYKRALADTENLRQRSQKLVEEAKLYGIQAFCKDLLEVADVLEKATQCVPKEEIKDDNPHLKNLYEGLVMTEVQIQKVFTKHGLLKLNPVGAKFDPYEHEALFHTPVEGKEPGTVALVSKVGYKLHGRTLRPALVGVVKEA.

Residues 1 to 27 (MAAQCVRLARRSLPALALSLRPSPRLL) constitute a mitochondrion transit peptide. The interval 29-56 (TATKQKNSGQNLEEDMGQSEQKADPPAT) is disordered. Residues 30-39 (ATKQKNSGQN) show a composition bias toward polar residues. At Lys94 the chain carries N6-acetyllysine; alternate. Residue Lys94 is modified to N6-succinyllysine; alternate. Residue Lys100 is modified to N6-acetyllysine. Lys120 carries the post-translational modification N6-succinyllysine. Lys215 bears the N6-acetyllysine; alternate mark. Lys215 bears the N6-succinyllysine; alternate mark.

Belongs to the GrpE family. Probable component of the PAM complex at least composed of a mitochondrial HSP70 protein, GRPEL1 or GRPEL2, TIMM44, TIMM16/PAM16 and TIMM14/DNAJC19. Binds to HSP70, HSC70 and HSJ1B.

It is found in the mitochondrion matrix. Essential component of the PAM complex, a complex required for the translocation of transit peptide-containing proteins from the inner membrane into the mitochondrial matrix in an ATP-dependent manner. Seems to control the nucleotide-dependent binding of mitochondrial HSP70 to substrate proteins. This is GrpE protein homolog 1, mitochondrial (GRPEL1) from Homo sapiens (Human).